The following is a 78-amino-acid chain: Large ribosomal subunit protein bL28 (78 aa).

The interval 1 to 23 (MSRVCQVSGKRVQTGNNVSHANN) is disordered. Positions 11 to 22 (RVQTGNNVSHAN) are enriched in polar residues.

It belongs to the bacterial ribosomal protein bL28 family.

The polypeptide is Large ribosomal subunit protein bL28 (Stenotrophomonas maltophilia (strain R551-3)).